The primary structure comprises 426 residues: Glutamate-1-semialdehyde 2,1-aminomutase (426 aa).

Residue Lys-263 is modified to N6-(pyridoxal phosphate)lysine.

The protein belongs to the class-III pyridoxal-phosphate-dependent aminotransferase family. HemL subfamily. Homodimer. Pyridoxal 5'-phosphate serves as cofactor.

Its subcellular location is the cytoplasm. The catalysed reaction is (S)-4-amino-5-oxopentanoate = 5-aminolevulinate. It functions in the pathway porphyrin-containing compound metabolism; protoporphyrin-IX biosynthesis; 5-aminolevulinate from L-glutamyl-tRNA(Glu): step 2/2. This is Glutamate-1-semialdehyde 2,1-aminomutase from Dichelobacter nodosus (strain VCS1703A).